Reading from the N-terminus, the 3763-residue chain is Colossin-B (3763 aa).

The signal sequence occupies residues 1–19; sequence MKGSIFLLFIFQIFKFSSS. N-linked (GlcNAc...) asparagine glycosylation is found at N43, N110, N258, and N284. The 25-residue stretch at 619–643 folds into the Follistatin-like 1 domain; that stretch reads DCSTLQCPSGYECKLDKNSKTRGCI. N652 and N672 each carry an N-linked (GlcNAc...) asparagine glycan. Follistatin-like domains are found at residues 701–724 and 729–752; these read HCRN…PRCF and PCEF…AKCF. Residues 792–832 are disordered; the sequence is PPIFYETPSPTSAPPTETPSPTDTPTDKPTIPPTPTPTPSK. The span at 810-820 shows a compositional bias: low complexity; the sequence is PSPTDTPTDKP. 2 N-linked (GlcNAc...) asparagine glycosylation sites follow: N845 and N991. 2 disordered regions span residues 1033-1068 and 1095-1124; these read LGSS…SESS and PQPT…PTST. Residues 1036 to 1051 are compositionally biased toward gly residues; that stretch reads SGSGSSGNSGSSGSGG. Composition is skewed to low complexity over residues 1052–1068 and 1099–1124; these read SSND…SESS and PSTD…PTST. Residue N1054 is glycosylated (N-linked (GlcNAc...) asparagine). Residues 1159–1227 form the CNA-B 1 domain; the sequence is VSGVEITLIQ…LLNKYPIDTS (69 aa). N-linked (GlcNAc...) asparagine glycans are attached at residues N1229 and N1247. The region spanning 1304-1373 is the CNA-B 2 domain; it reads IKGIQVTLKD…VYTMDTFQLS (70 aa). N-linked (GlcNAc...) asparagine glycosylation occurs at N1381. 3 consecutive CNA-B domains span residues 1437–1515, 1582–1648, and 1731–1809; these read LPGV…IDTK, VPGI…LTLD, and VGGV…FTLS. N-linked (GlcNAc...) asparagine glycosylation is found at N1769 and N1815. Positions 1883–1955 are disordered; the sequence is GSTVDGGTSV…SEQPPEDSME (73 aa). The span at 1898-1948 shows a compositional bias: low complexity; sequence STSTTTVSSSPSSSSDIGSSSDISSEVSSSLSSSPSSSEQPSEQSSSSSEQ. One can recognise a CNA-B 6 domain in the interval 2015-2083; that stretch reads VPDVTVTLVN…DPLSGKIDFN (69 aa). 21 N-linked (GlcNAc...) asparagine glycosylation sites follow: N2128, N2145, N2243, N2294, N2351, N2378, N2453, N2493, N2496, N2516, N2572, N2601, N2624, N2668, N2698, N2714, N2781, N2787, N2800, N2838, and N2858. The CNA-B 7 domain maps to 2143–2197; that stretch reads FPNITVRLFDQNLQPVLDNFNIQVEPTVTNALGQYYFDNLHSGSYIVKFEVPTRY. Positions 2292-2345 constitute a CNA-B 8 domain; sequence VPNVTVEIFNPTGQQVYNINELLIGSTTTDSNGYYLFDEIQPGSYIIKFSNIPN. One can recognise a CNA-B 9 domain in the interval 2453–2477; the sequence is NTTTTDQNGLYYFDNLSPGLYKLLF. Residues 2713-2766 form the CNA-B 10 domain; sequence VNGTIVTLLDINGNTMVDADSYPINSYTTGPDGYYKFDDFSFGKYIITFSGVPD. Residues 2984–3061 form the CNA-B 11 domain; the sequence is LGGVVVTLYN…DSNASPVDGY (78 aa). N3083, N3130, N3372, N3390, N3459, N3466, N3557, N3666, N3676, and N3681 each carry an N-linked (GlcNAc...) asparagine glycan. The CNA-B 12 domain maps to 3128 to 3201; it reads YPNITVSIYT…TKTGVNLGII (74 aa). The region spanning 3664–3733 is the CNA-B 13 domain; sequence MANITVQLFS…NDKRDLEKIN (70 aa).

It belongs to the serine-aspartate repeat-containing protein (SDr) family.

The protein resides in the secreted. The polypeptide is Colossin-B (colB) (Dictyostelium discoideum (Social amoeba)).